The primary structure comprises 161 residues: Large ribosomal subunit protein bL9 (161 aa).

This sequence belongs to the bacterial ribosomal protein bL9 family.

Binds to the 23S rRNA. This chain is Large ribosomal subunit protein bL9, found in Protochlamydia amoebophila (strain UWE25).